The following is a 445-amino-acid chain: Phosphoglucosamine mutase (445 aa).

S102 (phosphoserine intermediate) is an active-site residue. Residues S102, D240, D242, and D244 each contribute to the Mg(2+) site. S102 carries the post-translational modification Phosphoserine.

The protein belongs to the phosphohexose mutase family. Mg(2+) serves as cofactor. Post-translationally, activated by phosphorylation.

It carries out the reaction alpha-D-glucosamine 1-phosphate = D-glucosamine 6-phosphate. In terms of biological role, catalyzes the conversion of glucosamine-6-phosphate to glucosamine-1-phosphate. The sequence is that of Phosphoglucosamine mutase from Mycobacterium sp. (strain JLS).